The chain runs to 492 residues: Cobyric acid synthase (492 aa).

Positions 252-440 (RPKIAVLAYP…VHGLFADDHL (189 aa)) constitute a GATase cobBQ-type domain. The active-site Nucleophile is the cysteine 334. Histidine 432 is a catalytic residue.

The protein belongs to the CobB/CobQ family. CobQ subfamily.

Its pathway is cofactor biosynthesis; adenosylcobalamin biosynthesis. In terms of biological role, catalyzes amidations at positions B, D, E, and G on adenosylcobyrinic A,C-diamide. NH(2) groups are provided by glutamine, and one molecule of ATP is hydrogenolyzed for each amidation. The sequence is that of Cobyric acid synthase from Bradyrhizobium sp. (strain BTAi1 / ATCC BAA-1182).